Here is a 559-residue protein sequence, read N- to C-terminus: 2-isopropylmalate synthase (559 aa).

The Pyruvate carboxyltransferase domain maps to 33–307 (PIWCSSDLRD…DPQLDFSDID (275 aa)). Mg(2+)-binding residues include Asp-42, His-246, His-248, and Asn-282. Residues 439–559 (ANTPYALVSH…SLSQQEAKAA (121 aa)) form a regulatory domain region.

This sequence belongs to the alpha-IPM synthase/homocitrate synthase family. LeuA type 2 subfamily. In terms of assembly, homodimer. It depends on Mg(2+) as a cofactor.

The protein localises to the cytoplasm. The enzyme catalyses 3-methyl-2-oxobutanoate + acetyl-CoA + H2O = (2S)-2-isopropylmalate + CoA + H(+). The protein operates within amino-acid biosynthesis; L-leucine biosynthesis; L-leucine from 3-methyl-2-oxobutanoate: step 1/4. Its function is as follows. Catalyzes the condensation of the acetyl group of acetyl-CoA with 3-methyl-2-oxobutanoate (2-ketoisovalerate) to form 3-carboxy-3-hydroxy-4-methylpentanoate (2-isopropylmalate). The sequence is that of 2-isopropylmalate synthase from Pseudomonas fluorescens (strain SBW25).